Consider the following 264-residue polypeptide: Thymidylate synthase (264 aa).

DUMP is bound at residue arginine 21. Residue histidine 51 coordinates (6R)-5,10-methylene-5,6,7,8-tetrahydrofolate. 126 to 127 (RR) lines the dUMP pocket. Residue cysteine 146 is the Nucleophile of the active site. DUMP is bound by residues 166 to 169 (RSCD), asparagine 177, and 207 to 209 (HLY). A (6R)-5,10-methylene-5,6,7,8-tetrahydrofolate-binding site is contributed by aspartate 169. Alanine 263 provides a ligand contact to (6R)-5,10-methylene-5,6,7,8-tetrahydrofolate.

Belongs to the thymidylate synthase family. Bacterial-type ThyA subfamily. In terms of assembly, homodimer.

Its subcellular location is the cytoplasm. It carries out the reaction dUMP + (6R)-5,10-methylene-5,6,7,8-tetrahydrofolate = 7,8-dihydrofolate + dTMP. It functions in the pathway pyrimidine metabolism; dTTP biosynthesis. In terms of biological role, catalyzes the reductive methylation of 2'-deoxyuridine-5'-monophosphate (dUMP) to 2'-deoxythymidine-5'-monophosphate (dTMP) while utilizing 5,10-methylenetetrahydrofolate (mTHF) as the methyl donor and reductant in the reaction, yielding dihydrofolate (DHF) as a by-product. This enzymatic reaction provides an intracellular de novo source of dTMP, an essential precursor for DNA biosynthesis. This is Thymidylate synthase from Pectobacterium atrosepticum (strain SCRI 1043 / ATCC BAA-672) (Erwinia carotovora subsp. atroseptica).